We begin with the raw amino-acid sequence, 438 residues long: Ribosomal protein uS12 methylthiotransferase RimO (438 aa).

In terms of domain architecture, MTTase N-terminal spans 5 to 116 (PTIAISHLGC…IVQVIQRVEN (112 aa)). Positions 14, 50, 79, 154, 158, and 161 each coordinate [4Fe-4S] cluster. Residues 140–369 (TTSEGVAYLR…MQIQQPISLQ (230 aa)) enclose the Radical SAM core domain. In terms of domain architecture, TRAM spans 372–438 (CACIGDIVDV…IYDLYGEVIN (67 aa)).

It belongs to the methylthiotransferase family. RimO subfamily. The cofactor is [4Fe-4S] cluster.

The protein localises to the cytoplasm. It catalyses the reaction L-aspartate(89)-[ribosomal protein uS12]-hydrogen + (sulfur carrier)-SH + AH2 + 2 S-adenosyl-L-methionine = 3-methylsulfanyl-L-aspartate(89)-[ribosomal protein uS12]-hydrogen + (sulfur carrier)-H + 5'-deoxyadenosine + L-methionine + A + S-adenosyl-L-homocysteine + 2 H(+). Catalyzes the methylthiolation of an aspartic acid residue of ribosomal protein uS12. This Gloeothece citriformis (strain PCC 7424) (Cyanothece sp. (strain PCC 7424)) protein is Ribosomal protein uS12 methylthiotransferase RimO.